A 90-amino-acid chain; its full sequence is Small ribosomal subunit protein uS15c (90 aa).

It belongs to the universal ribosomal protein uS15 family. As to quaternary structure, part of the 30S ribosomal subunit.

It is found in the plastid. The protein localises to the chloroplast. This chain is Small ribosomal subunit protein uS15c (rps15), found in Manihot esculenta (Cassava).